The following is an 882-amino-acid chain: Alanine--tRNA ligase (882 aa).

His570, His574, Cys672, and His676 together coordinate Zn(2+).

This sequence belongs to the class-II aminoacyl-tRNA synthetase family. Zn(2+) is required as a cofactor.

It is found in the cytoplasm. The enzyme catalyses tRNA(Ala) + L-alanine + ATP = L-alanyl-tRNA(Ala) + AMP + diphosphate. Catalyzes the attachment of alanine to tRNA(Ala) in a two-step reaction: alanine is first activated by ATP to form Ala-AMP and then transferred to the acceptor end of tRNA(Ala). Also edits incorrectly charged Ser-tRNA(Ala) and Gly-tRNA(Ala) via its editing domain. The sequence is that of Alanine--tRNA ligase from Xanthomonas campestris pv. campestris (strain B100).